The following is a 223-amino-acid chain: Type III pantothenate kinase (223 aa).

An ATP-binding site is contributed by 17 to 24 (DIGNTHIH). Substrate-binding positions include Tyr81 and 85 to 88 (GIDR). Residue Asp87 is the Proton acceptor of the active site. Asp102 is a binding site for K(+). ATP is bound at residue Ser105. Substrate is bound at residue Thr157.

Belongs to the type III pantothenate kinase family. In terms of assembly, homodimer. NH4(+) serves as cofactor. The cofactor is K(+).

It is found in the cytoplasm. It catalyses the reaction (R)-pantothenate + ATP = (R)-4'-phosphopantothenate + ADP + H(+). It functions in the pathway cofactor biosynthesis; coenzyme A biosynthesis; CoA from (R)-pantothenate: step 1/5. In terms of biological role, catalyzes the phosphorylation of pantothenate (Pan), the first step in CoA biosynthesis. The polypeptide is Type III pantothenate kinase (Helicobacter pylori (strain HPAG1)).